The chain runs to 361 residues: Chorismate synthase (361 aa).

Residues arginine 48 and arginine 54 each contribute to the NADP(+) site. Residues 125–127 (RSS), 238–239 (NA), glycine 278, 293–297 (KPTSS), and arginine 319 contribute to the FMN site.

This sequence belongs to the chorismate synthase family. Homotetramer. The cofactor is FMNH2.

It catalyses the reaction 5-O-(1-carboxyvinyl)-3-phosphoshikimate = chorismate + phosphate. Its pathway is metabolic intermediate biosynthesis; chorismate biosynthesis; chorismate from D-erythrose 4-phosphate and phosphoenolpyruvate: step 7/7. Its function is as follows. Catalyzes the anti-1,4-elimination of the C-3 phosphate and the C-6 proR hydrogen from 5-enolpyruvylshikimate-3-phosphate (EPSP) to yield chorismate, which is the branch point compound that serves as the starting substrate for the three terminal pathways of aromatic amino acid biosynthesis. This reaction introduces a second double bond into the aromatic ring system. In Sodalis glossinidius (strain morsitans), this protein is Chorismate synthase.